A 137-amino-acid polypeptide reads, in one-letter code: Cellular retinoic acid-binding protein 1 (137 aa).

The Nuclear localization signal motif lies at 21–31 (KALGVNAMLRK). 132 to 134 (RIY) provides a ligand contact to all-trans-retinoate.

It belongs to the calycin superfamily. Fatty-acid binding protein (FABP) family.

It localises to the cytoplasm. In terms of biological role, cytosolic CRABPs may regulate the access of retinoic acid to the nuclear retinoic acid receptors. The sequence is that of Cellular retinoic acid-binding protein 1 (CRABP1) from Gallus gallus (Chicken).